A 173-amino-acid polypeptide reads, in one-letter code: C-phycocyanin-2 beta subunit (173 aa).

Asn73 carries the N4-methylasparagine modification. Cys83 and Cys154 together coordinate (2R,3E)-phycocyanobilin.

The protein belongs to the phycobiliprotein family. As to quaternary structure, heterodimer of an alpha and a beta subunit, which further assembles into trimers and the trimers into hexamers. Contains two covalently linked bilin chromophores.

The protein localises to the cellular thylakoid membrane. Functionally, light-harvesting photosynthetic bile pigment-protein from the phycobiliprotein complex (phycobilisome, PBS). Phycocyanin is the major phycobiliprotein in the PBS rod. This Synechococcus sp. (strain ATCC 27144 / PCC 6301 / SAUG 1402/1) (Anacystis nidulans) protein is C-phycocyanin-2 beta subunit (cpcB2).